We begin with the raw amino-acid sequence, 162 residues long: ATP synthase subunit b 1 (162 aa).

A helical transmembrane segment spans residues 1 to 21 (MLLTAEFWVAVAFVAFLVIVW).

The protein belongs to the ATPase B chain family. As to quaternary structure, F-type ATPases have 2 components, F(1) - the catalytic core - and F(0) - the membrane proton channel. F(1) has five subunits: alpha(3), beta(3), gamma(1), delta(1), epsilon(1). F(0) has three main subunits: a(1), b(2) and c(10-14). The alpha and beta chains form an alternating ring which encloses part of the gamma chain. F(1) is attached to F(0) by a central stalk formed by the gamma and epsilon chains, while a peripheral stalk is formed by the delta and b chains.

It is found in the cell inner membrane. In terms of biological role, f(1)F(0) ATP synthase produces ATP from ADP in the presence of a proton or sodium gradient. F-type ATPases consist of two structural domains, F(1) containing the extramembraneous catalytic core and F(0) containing the membrane proton channel, linked together by a central stalk and a peripheral stalk. During catalysis, ATP synthesis in the catalytic domain of F(1) is coupled via a rotary mechanism of the central stalk subunits to proton translocation. Component of the F(0) channel, it forms part of the peripheral stalk, linking F(1) to F(0). This is ATP synthase subunit b 1 from Methylorubrum populi (strain ATCC BAA-705 / NCIMB 13946 / BJ001) (Methylobacterium populi).